Here is a 245-residue protein sequence, read N- to C-terminus: MTIQLEVCIDNLESLHYAQQGGASRIELCSSLALGGLTPSAGFMQLAAKHASIPVYAMIRPRQGDFLFSSDDVEIMLADIHAAKKAQLQGVVIGVLTQEGHIDRDILNSLMKEANGLGVTFHRAIDQCIDPMAALDNIMAAGCERILTSGLQANALDGVDMIAEMVTYCGDNLSIMAGAGVTATNAKQIITRTGIREIHLSGKSTRPSHMVQFANQAHMGSADIDDFSIPVTSVEKISAVINAIR.

This sequence belongs to the CutC family.

It localises to the cytoplasm. This Photobacterium profundum (strain SS9) protein is PF03932 family protein CutC.